The sequence spans 332 residues: MKVTFEELKGAFYRVLRSRNIAEDTADACAEMFARTTESGVYSHGVNRFPRFIQQLDNGDIIPDAKPQRVTSLGAIEQWDAQRAIGNLTAKKMMDRAIELASDHGIGLVALRNANHWMRGGSYGWQAAEKGYIGICWTNSIAVMPPWGAKECRIGTNPLIVAIPSTPITMVDMSMSMFSYGMLEVNRLAGRELPVDGGFDDNGQLTKEPGVIEKNRRILPMGYWKGSGLSIVLDMIATLLSNGSSVAEVTQENSDEYGVSQIFIAIEVDKLIDGATRDAKLQRIMDFITTAERADDNVAIRLPGHEFTKLLDDNRRHGITIDDSVWAKIQAL.

H44 serves as the catalytic Proton donor. Residues 168-174 (ITMVDMS), 224-225 (WK), and 304-306 (GHE) contribute to the NAD(+) site.

The protein belongs to the LDH2/MDH2 oxidoreductase family. DlgD subfamily. As to quaternary structure, homodimer.

It is found in the cytoplasm. It carries out the reaction 3-dehydro-L-gulonate + NAD(+) = 2,3-dioxo-L-gulonate + NADH + H(+). It catalyses the reaction 3-dehydro-L-gulonate + NADP(+) = 2,3-dioxo-L-gulonate + NADPH + H(+). In terms of biological role, catalyzes the reduction of 2,3-diketo-L-gulonate in the presence of NADH, to form 3-keto-L-gulonate. The polypeptide is 2,3-diketo-L-gulonate reductase (Salmonella agona (strain SL483)).